We begin with the raw amino-acid sequence, 124 residues long: MPTIQQLIRTERSRLKAKTKSPALKSCPERRGVCTRVYTSTPKKPNSALRKVARVRLTSGFEVTAYIGGVGHNLQEHSVVLIRGGRVKDLPGVRYHIIRGTLDTAGVKDRRQSRSKYGAKAPKE.

At aspartate 89 the chain carries 3-methylthioaspartic acid. The tract at residues 104 to 124 (TAGVKDRRQSRSKYGAKAPKE) is disordered.

Belongs to the universal ribosomal protein uS12 family. As to quaternary structure, part of the 30S ribosomal subunit. Contacts proteins S8 and S17. May interact with IF1 in the 30S initiation complex.

With S4 and S5 plays an important role in translational accuracy. In terms of biological role, interacts with and stabilizes bases of the 16S rRNA that are involved in tRNA selection in the A site and with the mRNA backbone. Located at the interface of the 30S and 50S subunits, it traverses the body of the 30S subunit contacting proteins on the other side and probably holding the rRNA structure together. The combined cluster of proteins S8, S12 and S17 appears to hold together the shoulder and platform of the 30S subunit. In Synechococcus sp. (strain CC9605), this protein is Small ribosomal subunit protein uS12.